Reading from the N-terminus, the 313-residue chain is Beta-lactamase (313 aa).

The N-terminal stretch at 1–15 (MQRIGVTDYTILGTV) is a signal peptide. Serine 190 serves as the catalytic Acyl-ester intermediate.

It belongs to the class-C beta-lactamase family.

The enzyme catalyses a beta-lactam + H2O = a substituted beta-amino acid. Upon expression in E.coli enables the latter to utilize penicillin as a carbon source. The protein is Beta-lactamase (penA) of Burkholderia multivorans (strain ATCC 17616 / 249).